The primary structure comprises 556 residues: Protein misato homolog 1 (556 aa).

S41 bears the Phosphoserine mark.

The protein belongs to the misato family.

It is found in the mitochondrion outer membrane. The protein localises to the cytoplasm. Its function is as follows. Involved in the regulation of mitochondrial distribution and morphology. Required for mitochondrial fusion and mitochondrial network formation. The chain is Protein misato homolog 1 (Msto1) from Mus musculus (Mouse).